Consider the following 365-residue polypeptide: MAYSKACYKLTTITILLLSFTLPSLAGNAENADVSECKAESGDLSCHNNKEAQKLKIIAIPSILVASMIGVSLPLFSRSIPALGPDREMSVIVKTLASGVILATGFMHVLPDSFDDLTSKCLPEDPWQKFPFATFITMISALLVLMIESFAMCAYARRTSKREGEVVPLENGSNSVDTQNDIQTLENGSSYVEKQEKVNEDKTSELLRNKVIAQILELGIVVHSVVIGLAMGASDNKCTVQSLIAALCFHQLFEGMGLGGSILQAQFKSKTNWTMVFFFSVTTPFGIVLGMAIQKIYDETSPTALIVVGVLNACSAGLLIYMALVNLLAHEFFGPKIQGNIKLHVLGYVATFTGAAGMSLMAKWA.

An N-terminal signal peptide occupies residues 1-26; sequence MAYSKACYKLTTITILLLSFTLPSLA. Residues 27–56 lie on the Extracellular side of the membrane; sequence GNAENADVSECKAESGDLSCHNNKEAQKLK. The chain crosses the membrane as a helical span at residues 57 to 77; sequence IIAIPSILVASMIGVSLPLFS. Topologically, residues 78–90 are cytoplasmic; it reads RSIPALGPDREMS. The chain crosses the membrane as a helical span at residues 91-111; sequence VIVKTLASGVILATGFMHVLP. Residues 112-129 lie on the Extracellular side of the membrane; the sequence is DSFDDLTSKCLPEDPWQK. A helical membrane pass occupies residues 130-150; the sequence is FPFATFITMISALLVLMIESF. Residues 151 to 210 lie on the Cytoplasmic side of the membrane; the sequence is AMCAYARRTSKREGEVVPLENGSNSVDTQNDIQTLENGSSYVEKQEKVNEDKTSELLRNK. Residues 211 to 231 form a helical membrane-spanning segment; the sequence is VIAQILELGIVVHSVVIGLAM. At 232-242 the chain is on the extracellular side; the sequence is GASDNKCTVQS. Residues 243-263 form a helical membrane-spanning segment; that stretch reads LIAALCFHQLFEGMGLGGSIL. The Cytoplasmic segment spans residues 264-272; that stretch reads QAQFKSKTN. Residues 273–293 traverse the membrane as a helical segment; the sequence is WTMVFFFSVTTPFGIVLGMAI. The Extracellular segment spans residues 294 to 304; the sequence is QKIYDETSPTA. A helical membrane pass occupies residues 305 to 325; it reads LIVVGVLNACSAGLLIYMALV. Residues 326-344 lie on the Cytoplasmic side of the membrane; sequence NLLAHEFFGPKIQGNIKLH. Residues 345-365 form a helical membrane-spanning segment; it reads VLGYVATFTGAAGMSLMAKWA.

Belongs to the ZIP transporter (TC 2.A.5) family.

It is found in the cell membrane. In terms of biological role, probably mediates zinc uptake from the rhizosphere. The sequence is that of Zinc transporter 7 (ZIP7) from Arabidopsis thaliana (Mouse-ear cress).